Reading from the N-terminus, the 331-residue chain is D-alanine--D-alanine ligase (331 aa).

In terms of domain architecture, ATP-grasp spans 116–316 (KRLWQTHSLP…YEDFVLQLAA (201 aa)). 142-197 (ADRLGLPLIVKPAREGSSIGLTKVTSVAELPAAYEKAARLDRDVMAEQFIDGDELT) is a binding site for ATP. 3 residues coordinate Mg(2+): aspartate 269, glutamate 283, and asparagine 285.

Belongs to the D-alanine--D-alanine ligase family. Mg(2+) is required as a cofactor. The cofactor is Mn(2+).

It localises to the cytoplasm. The enzyme catalyses 2 D-alanine + ATP = D-alanyl-D-alanine + ADP + phosphate + H(+). Its pathway is cell wall biogenesis; peptidoglycan biosynthesis. Its function is as follows. Cell wall formation. This chain is D-alanine--D-alanine ligase, found in Ralstonia nicotianae (strain ATCC BAA-1114 / GMI1000) (Ralstonia solanacearum).